The following is a 130-amino-acid chain: Cholecystokinin (130 aa).

The first 20 residues, 1–20, serve as a signal peptide directing secretion; it reads MYSGICIYMFLAMLSTSSSG. A propeptide spanning residues 21–60 is cleaved from the precursor; sequence QQATGSHNENPVATELEQSLTEHHRHVRVPSSAGQLKPIQ. The residue at position 112 (Y112) is a Sulfotyrosine. At F118 the chain carries Phenylalanine amide. The propeptide occupies 122 to 130; sequence SAEEYEYSS. Sulfotyrosine is present on residues Y126 and Y128.

This sequence belongs to the gastrin/cholecystokinin family. Post-translationally, the precursor is cleaved by proteases to produce a number of active cholecystokinins. Expressed in brain, duodenum and small intestine.

The protein localises to the secreted. Functionally, this peptide hormone induces gall bladder contraction and the release of pancreatic enzymes in the gut. Its function in the brain is not clear. The protein is Cholecystokinin of Trachemys scripta (Red-eared slider turtle).